A 175-amino-acid polypeptide reads, in one-letter code: Major pollen allergen Pha a 5.4 (175 aa).

Belongs to the Poa p IX/Phl p VI allergen family.

This Phalaris aquatica (Canary grass) protein is Major pollen allergen Pha a 5.4.